A 263-amino-acid chain; its full sequence is 3-deoxy-manno-octulosonate cytidylyltransferase (263 aa).

This sequence belongs to the KdsB family.

It localises to the cytoplasm. The enzyme catalyses 3-deoxy-alpha-D-manno-oct-2-ulosonate + CTP = CMP-3-deoxy-beta-D-manno-octulosonate + diphosphate. It participates in nucleotide-sugar biosynthesis; CMP-3-deoxy-D-manno-octulosonate biosynthesis; CMP-3-deoxy-D-manno-octulosonate from 3-deoxy-D-manno-octulosonate and CTP: step 1/1. The protein operates within bacterial outer membrane biogenesis; lipopolysaccharide biosynthesis. Activates KDO (a required 8-carbon sugar) for incorporation into bacterial lipopolysaccharide in Gram-negative bacteria. In Burkholderia mallei (strain NCTC 10229), this protein is 3-deoxy-manno-octulosonate cytidylyltransferase.